Reading from the N-terminus, the 668-residue chain is MSKEQILLRINQLKEQLNLWSKQYYVDDNPSVDDTEYDLALKELISLENLYPEFITSDSPSQKVGGTVSEKFLKITHKTPMLSLGNVFNFDEFLEFNTQVSKVSNNLNNEYVAELKIDGLSISLVYENGVLVSAATRGNGVIGEDVTTNVRTIKSIPLKISKKERVEVRGEIYLSKAEFEKINQKRLLNNEDLFINPRNAAAGTLRQLDSKIVASRNLDAFLYYYISDDSPNLNQYESILKLNQLGFKTNKETMLCKNLDQIKAYIDKYTNLKNDLDYQIDGIVFKINDKNLQNSLGFTSKIPKWAIAYKFPAEIKQTKLLDIFATVGRTGKITYNAKLEPVFLMGATISAATLNNAEYIKSKDLRINSIVKIKKAGDVIPEVIEAIKDETFYNLEVFQPILYCPNCHSLLEKNENEVDQFCINSSCSMKILRSLQHFSSREAMNIVSLGDRSLEILFNLEIIQNISDIYKLEEYKDQILAIENFGLKSYLNLIDSINMSKNNSLEKVLFGLGIRHIGSKTAKILARKYQNIDNLMKASYDELIQINSIGESLALSIIDWFKIEDNLKLINELKSFNINFNYLGAKINSDSIIANKTFVITGTLTRPREEFKTLIENNAGKISGSISKQTDYLLAGNNVGSKLEKAKKLGVIIIDEQQFFDLLKSEKG.

NAD(+) contacts are provided by residues 34 to 38 (DTEYD), 83 to 84 (SL), and Glu114. Residue Lys116 is the N6-AMP-lysine intermediate of the active site. Arg137, Glu171, Lys286, and Lys310 together coordinate NAD(+). Zn(2+) contacts are provided by Cys404, Cys407, Cys422, and Cys427. The BRCT domain occupies 588 to 668 (NSDSIIANKT…FFDLLKSEKG (81 aa)).

This sequence belongs to the NAD-dependent DNA ligase family. LigA subfamily. Requires Mg(2+) as cofactor. Mn(2+) is required as a cofactor.

It carries out the reaction NAD(+) + (deoxyribonucleotide)n-3'-hydroxyl + 5'-phospho-(deoxyribonucleotide)m = (deoxyribonucleotide)n+m + AMP + beta-nicotinamide D-nucleotide.. Its function is as follows. DNA ligase that catalyzes the formation of phosphodiester linkages between 5'-phosphoryl and 3'-hydroxyl groups in double-stranded DNA using NAD as a coenzyme and as the energy source for the reaction. It is essential for DNA replication and repair of damaged DNA. The chain is DNA ligase from Mycoplasma capricolum subsp. capricolum (strain California kid / ATCC 27343 / NCTC 10154).